Reading from the N-terminus, the 471-residue chain is Siroheme synthase (471 aa).

The precorrin-2 dehydrogenase /sirohydrochlorin ferrochelatase stretch occupies residues 1–203; the sequence is MEYLPLFADL…GRLEQAEQAL (203 aa). Residues 22-23 and 43-44 each bind NAD(+); these read EV and RA. S128 carries the phosphoserine modification. Residues 215-471 are uroporphyrinogen-III C-methyltransferase; it reads GEVALVGAGP…QKRASVVNLA (257 aa). P224 lines the S-adenosyl-L-methionine pocket. The active-site Proton acceptor is the D247. K269 (proton donor) is an active-site residue. Residues 300–302, I305, 330–331, M382, and G411 each bind S-adenosyl-L-methionine; these read GGD and TA.

The protein in the N-terminal section; belongs to the precorrin-2 dehydrogenase / sirohydrochlorin ferrochelatase family. In the C-terminal section; belongs to the precorrin methyltransferase family.

The catalysed reaction is uroporphyrinogen III + 2 S-adenosyl-L-methionine = precorrin-2 + 2 S-adenosyl-L-homocysteine + H(+). The enzyme catalyses precorrin-2 + NAD(+) = sirohydrochlorin + NADH + 2 H(+). It carries out the reaction siroheme + 2 H(+) = sirohydrochlorin + Fe(2+). It participates in cofactor biosynthesis; adenosylcobalamin biosynthesis; precorrin-2 from uroporphyrinogen III: step 1/1. It functions in the pathway cofactor biosynthesis; adenosylcobalamin biosynthesis; sirohydrochlorin from precorrin-2: step 1/1. Its pathway is porphyrin-containing compound metabolism; siroheme biosynthesis; precorrin-2 from uroporphyrinogen III: step 1/1. The protein operates within porphyrin-containing compound metabolism; siroheme biosynthesis; siroheme from sirohydrochlorin: step 1/1. It participates in porphyrin-containing compound metabolism; siroheme biosynthesis; sirohydrochlorin from precorrin-2: step 1/1. Multifunctional enzyme that catalyzes the SAM-dependent methylations of uroporphyrinogen III at position C-2 and C-7 to form precorrin-2 via precorrin-1. Then it catalyzes the NAD-dependent ring dehydrogenation of precorrin-2 to yield sirohydrochlorin. Finally, it catalyzes the ferrochelation of sirohydrochlorin to yield siroheme. In Sodalis glossinidius (strain morsitans), this protein is Siroheme synthase.